The primary structure comprises 286 residues: Aldo-keto reductase MAV_4483 (286 aa).

Catalysis depends on Y61, which acts as the Proton donor. Positions 201, 203, 239, 241, 242, 247, and 251 each coordinate NADPH.

The protein belongs to the aldo/keto reductase family.

The polypeptide is Aldo-keto reductase MAV_4483 (Mycobacterium avium (strain 104)).